We begin with the raw amino-acid sequence, 564 residues long: Poly(U)-binding-splicing factor PUF60 (564 aa).

The tract at residues 1 to 521 is inhibits homodimerization; sequence MATATIALQV…EDAEIIVKIF (521 aa). The tract at residues 37-61 is disordered; that stretch reads KWKPPQGTESIKMENGQSTGTKLGL. A Glycyl lysine isopeptide (Lys-Gly) (interchain with G-Cter in SUMO2) cross-link involves residue Lys-48. A Phosphothreonine modification is found at Thr-65. The interval 82 to 564 is inhibits transcriptional repression, interaction with ERCC3 and apoptosis induction; sequence QSIKSVLVKQ…ERFDNSDLSA (483 aa). Lys-85 is covalently cross-linked (Glycyl lysine isopeptide (Lys-Gly) (interchain with G-Cter in SUMO2)). A Phosphoserine modification is found at Ser-117. RRM domains follow at residues 134–212 and 231–309; these read CRVY…RPSN and NRIY…KAVT. A Phosphoserine modification is found at Ser-249. The residue at position 256 (Lys-256) is an N6-acetyllysine. Residue Thr-319 is modified to Phosphothreonine. Positions 421-442 are disordered; the sequence is KKEKEEEELFPESERPEMLSEQ. Residue Lys-424 forms a Glycyl lysine isopeptide (Lys-Gly) (interchain with G-Cter in SUMO2) linkage. The segment covering 432-442 has biased composition (basic and acidic residues); sequence ESERPEMLSEQ. Lys-459 carries the post-translational modification N6-acetyllysine. Lys-463 participates in a covalent cross-link: Glycyl lysine isopeptide (Lys-Gly) (interchain with G-Cter in SUMO2). Residues 467-554 form the RRM 3; atypical domain; the sequence is TVMVLRNMVD…RKVVAEVYDQ (88 aa).

It belongs to the RRM half pint family. Homodimer. Associates with the spliceosome. Found in a complex with RO60 and Y5 RNA. Found in a complex with FUBP1 and far upstream element (FUSE) DNA segment. Interacts directly with ERCC3. Interacts with CDK7 and GTF2H1. Interacts with SRSF11/P54. Interacts with ARGLU1; interaction may be involved in ARGLU1-mediated modulation of alternative splicing.

The protein resides in the nucleus. Functionally, DNA- and RNA-binding protein, involved in several nuclear processes such as pre-mRNA splicing, apoptosis and transcription regulation. In association with FUBP1 regulates MYC transcription at the P2 promoter through the core-TFIIH basal transcription factor. Acts as a transcriptional repressor through the core-TFIIH basal transcription factor. Represses FUBP1-induced transcriptional activation but not basal transcription. Decreases ERCC3 helicase activity. Is also involved in pre-mRNA splicing. Promotes splicing of an intron with weak 3'-splice site and pyrimidine tract in a cooperative manner with U2AF2. Involved in apoptosis induction when overexpressed in HeLa cells. Modulates alternative splicing of several mRNAs. Binds to relaxed DNA of active promoter regions. Binds to the pyrimidine tract and 3'-splice site regions of pre-mRNA; binding is enhanced in presence of U2AF2. Binds to Y5 RNA in association with RO60. Binds to poly(U) RNA. The protein is Poly(U)-binding-splicing factor PUF60 of Rattus norvegicus (Rat).